Reading from the N-terminus, the 396-residue chain is Corticosteroid-binding globulin (396 aa).

The first 22 residues, 1 to 22 (MSLALYTCLLWLCTSGLWTAQA), serve as a signal peptide directing secretion. Residues Asn-88 and Asn-216 are each glycosylated (N-linked (GlcNAc...) asparagine). Gln-246 lines the cortisol pocket. The N-linked (GlcNAc...) asparagine glycan is linked to Asn-252. A cortisol-binding site is contributed by Asp-278. Asn-319 and Asn-352 each carry an N-linked (GlcNAc...) asparagine glycan. Trp-384 is a cortisol binding site.

The protein belongs to the serpin family. In terms of tissue distribution, expressed by the liver; secreted in plasma.

Its subcellular location is the secreted. Functionally, major transport protein for glucocorticoids and progestins in the blood of almost all vertebrate species. The polypeptide is Corticosteroid-binding globulin (Serpina6) (Rattus norvegicus (Rat)).